The sequence spans 429 residues: MKPVFKMLLSLLILWTSLLHAQVRIQITQGVDSARPIAVVPFKWLGTVEPPEKIADIISSDLRNSGKFNPIDPSRMPEKPFTASELITSSWYGLGVDAVVVGQIQAGADNHYLISYQLVELSSGTVLTQNQYKVTQQWLRYAAHSASDEIFQKLTGIKGAFSTRIAYVVQKNTRQLPYELKISDYDGYNPFVVYRSSQPLMSPAWSPDGQKLAYVNFESGRSALVIQNLASGSIQKIANFQGHNGAPAFSPDGAKLAFALSKTGSLNIYMMDLASGNITQITDSRSNNTEPSWFPDSRYLAYTSDQAGRPQVYKIDISGHGVPQRITWNAKQNQNSAVSPDGTFLILVNSKDGQQHIAKQDLKTGDVQILTDTLLDETPSIAPNTTMVIYSSTQNANSVLQLVSTDGRFKALLPEVDGQVKFPAWSPYL.

An N-terminal signal peptide occupies residues 1–21 (MKPVFKMLLSLLILWTSLLHA).

This sequence belongs to the TolB family. As to quaternary structure, the Tol-Pal system is composed of five core proteins: the inner membrane proteins TolA, TolQ and TolR, the periplasmic protein TolB and the outer membrane protein Pal. They form a network linking the inner and outer membranes and the peptidoglycan layer.

Its subcellular location is the periplasm. Functionally, part of the Tol-Pal system, which plays a role in outer membrane invagination during cell division and is important for maintaining outer membrane integrity. TolB occupies a key intermediary position in the Tol-Pal system because it communicates directly with both membrane-embedded components, Pal in the outer membrane and TolA in the inner membrane. In Hamiltonella defensa subsp. Acyrthosiphon pisum (strain 5AT), this protein is Tol-Pal system protein TolB.